A 203-amino-acid polypeptide reads, in one-letter code: MTKYTFKPKNFKAFTVDGLDARMEALNERVRPQLNHLGDYFAQYLETATGEIFYPHVAKHARRSVNPPKDTWVAFATNNRGYKMQPHFQIGLFENQLFVMYGVMHEAKDKAQQVQAFVDQFDALRNLPSDYSVSLDHMSQEKTYIHNMTDEDLFKAFRRVKEVKKGEFFVARTLSPNSEHLKNDKAFLSFLEETFEQLLKFYK.

This sequence belongs to the UPF0637 family.

The polypeptide is UPF0637 protein SSP1683 (Staphylococcus saprophyticus subsp. saprophyticus (strain ATCC 15305 / DSM 20229 / NCIMB 8711 / NCTC 7292 / S-41)).